The following is a 305-amino-acid chain: Serine/threonine-protein kinase 16 (305 aa).

A lipid anchor (N-myristoyl glycine) is attached at Gly-2. 2 S-palmitoyl cysteine lipidation sites follow: Cys-6 and Cys-8. Residues 20 to 293 (YLFVQKLGEG…PVLLSQLEAL (274 aa)) enclose the Protein kinase domain. Residues 26 to 34 (LGEGGFSYV) and Lys-49 each bind ATP. Residue Asp-148 is the Proton acceptor of the active site. The interval 166 to 202 (DLGSMNQACIQVEGSRQALALQDWAAQRCTISYRAPE) is activation loop. Ser-197 bears the Phosphoserine; by autocatalysis mark. Phosphotyrosine; by autocatalysis is present on Tyr-198.

The protein belongs to the protein kinase superfamily. Ser/Thr protein kinase family. In terms of assembly, monomer. Interacts with DRG1 (via its N-terminal); the interaction phosphorylates DRG1. In terms of processing, mainly autophosphorylated on serine/threonine residues. Also autophosphorylated on Tyr-198. Ubiquitously expressed at low levels. Relatively higher levels in testis, kidney and liver.

It is found in the cytoplasm. The protein localises to the perinuclear region. It localises to the membrane. It carries out the reaction L-seryl-[protein] + ATP = O-phospho-L-seryl-[protein] + ADP + H(+). The enzyme catalyses L-threonyl-[protein] + ATP = O-phospho-L-threonyl-[protein] + ADP + H(+). It catalyses the reaction L-tyrosyl-[protein] + ATP = O-phospho-L-tyrosyl-[protein] + ADP + H(+). Membrane-associated protein kinase that phosphorylates on serine and threonine residues. In vitro substrates include DRG1, ENO1 and EIF4EBP1. Also autophosphorylates. May be involved in secretory vesicle trafficking or intracellular signaling. May have a role in regulating stromal-epithelial interactions that occur during ductal morphogenesis in the mammary gland. May be involved in TGF-beta signaling. Able to autophosphorylate on Tyr residue; it is however unclear whether it has tyrosine-protein kinase toward other proteins. This chain is Serine/threonine-protein kinase 16 (Stk16), found in Mus musculus (Mouse).